The primary structure comprises 444 residues: Glutamyl-tRNA reductase (444 aa).

Substrate-binding positions include 49–52 (TCNR), Ser109, 114–116 (ETQ), and Gln120. Cys50 acts as the Nucleophile in catalysis. 189–194 (GAGKMG) contacts NADP(+).

The protein belongs to the glutamyl-tRNA reductase family. In terms of assembly, homodimer.

It catalyses the reaction (S)-4-amino-5-oxopentanoate + tRNA(Glu) + NADP(+) = L-glutamyl-tRNA(Glu) + NADPH + H(+). Its pathway is porphyrin-containing compound metabolism; protoporphyrin-IX biosynthesis; 5-aminolevulinate from L-glutamyl-tRNA(Glu): step 1/2. Functionally, catalyzes the NADPH-dependent reduction of glutamyl-tRNA(Glu) to glutamate 1-semialdehyde (GSA). In Bacillus cereus (strain G9842), this protein is Glutamyl-tRNA reductase.